Consider the following 96-residue polypeptide: Uteroglobin (96 aa).

A signal peptide spans 1–21 (MKIAITMAVVMLSVCCSSASS).

This sequence belongs to the secretoglobin family. Antiparallel homodimer; disulfide-linked. Interaction with LMBR1L is controversial.

Its subcellular location is the secreted. In terms of biological role, binds phosphatidylcholine, phosphatidylinositol, polychlorinated biphenyls (PCB) and weakly progesterone, potent inhibitor of phospholipase A2. This is Uteroglobin (SCGB1A1) from Mesocricetus auratus (Golden hamster).